Consider the following 332-residue polypeptide: Homeobox protein DLX-2 (332 aa).

Polar residues predominate over residues 19–28 (ASSTYHQHQQ). Positions 19 to 83 (ASSTYHQHQQ…QHPAGGGGGG (65 aa)) are disordered. The span at 40–49 (NSNSSSSNSS) shows a compositional bias: low complexity. The segment covering 55–75 (ESPTLPVSTATDSSYYTNQQH) has biased composition (polar residues). Positions 155–214 (VRKPRTIYSSFQLAALQRRFQKTQYLALPERAELAASLGLTQTQVKIWFQNRRSKFKKMW) form a DNA-binding region, homeobox. Disordered stretches follow at residues 219–272 (IPTE…SSPS) and 304–332 (PSQT…GTIF). Position 235 is a phosphoserine (Ser-235). Residues 253 to 266 (AGGGPGSGGGGAGS) show a composition bias toward gly residues. A compositionally biased stretch (basic residues) spans 310–320 (AHHHHHHHHHA).

It belongs to the distal-less homeobox family. In terms of assembly, interacts (via homeobox DNA-binding domain) with POU4F2; this interaction enhances retinal ganglion cell (RGC) differentiation. Phosphorylated by serine/threonine kinases. Expressed only in neural and other ectodermal structures of the head: the brain, the vomeronasal organ, and the preameloblasts of the teeth. Primarily expressed in the germinal cells of the ventral forebrain in the midgestational embryo, and in both dorsal and ventral ventricular zones in late embryogenesis and early postnatal life. Expressed in the inner nuclear layer of the retina.

It is found in the nucleus. Functionally, acts as a transcriptional activator. Activates transcription of CGA/alpha-GSU, via binding to the downstream activin regulatory element (DARE) in the gene promoter. Plays a role in terminal differentiation of interneurons, such as amacrine and bipolar cells in the developing retina. Likely to play a regulatory role in the development of the ventral forebrain. May play a role in craniofacial patterning and morphogenesis. The polypeptide is Homeobox protein DLX-2 (Dlx2) (Mus musculus (Mouse)).